The primary structure comprises 201 residues: Large ribosomal subunit protein uL4 (201 aa).

Residues 44–71 (RAQKTRAEVTGSGKKPWRQKGTGRARSG) are disordered.

This sequence belongs to the universal ribosomal protein uL4 family. As to quaternary structure, part of the 50S ribosomal subunit.

In terms of biological role, one of the primary rRNA binding proteins, this protein initially binds near the 5'-end of the 23S rRNA. It is important during the early stages of 50S assembly. It makes multiple contacts with different domains of the 23S rRNA in the assembled 50S subunit and ribosome. Functionally, forms part of the polypeptide exit tunnel. This chain is Large ribosomal subunit protein uL4, found in Shigella flexneri serotype 5b (strain 8401).